A 390-amino-acid chain; its full sequence is MRYITAGESHGPQLTTIIEGVPAGLSLVADDINEELARRQKGYGRGRRMQIETDQVQILSGVRHGETLGSPIALVVENRDFAHWTKIMGAEPLTEQEEKEMKRKVTKPRPGHADLNGAIKYGHRDMRNVLERSSARETTVRVAAGAVAKKVLAELGIKVAGHVIEIGGVQAKEITYSSIEELKSITEASPVRCLDDEAGNQMMKAIDDAKANGDSIGGIVEVIVEGMPIGVGSYVHYDRKLDAKLAAAIMSINAFKGVEIGIGFEAAHRPGSEVHDEILWNEEHGYTRRTNNAGGLEGGMTTGMPIVVRGVMKPIPTLYKPLQSVDIDTKEPFTASIERSDSCAVPAASVVAEAVVAWELATALIEQFGLDRMELIRENIEKHNEYARGF.

Residues arginine 39 and arginine 45 each coordinate NADP(+). A disordered region spans residues glutamate 95 to glycine 117. Residues arginine 132 to serine 134, asparagine 253 to alanine 254, glycine 298, lysine 313 to threonine 317, and arginine 339 contribute to the FMN site.

This sequence belongs to the chorismate synthase family. In terms of assembly, homotetramer. The cofactor is FMNH2.

The enzyme catalyses 5-O-(1-carboxyvinyl)-3-phosphoshikimate = chorismate + phosphate. The protein operates within metabolic intermediate biosynthesis; chorismate biosynthesis; chorismate from D-erythrose 4-phosphate and phosphoenolpyruvate: step 7/7. Its function is as follows. Catalyzes the anti-1,4-elimination of the C-3 phosphate and the C-6 proR hydrogen from 5-enolpyruvylshikimate-3-phosphate (EPSP) to yield chorismate, which is the branch point compound that serves as the starting substrate for the three terminal pathways of aromatic amino acid biosynthesis. This reaction introduces a second double bond into the aromatic ring system. The protein is Chorismate synthase 1 of Bacillus cereus (strain ATCC 14579 / DSM 31 / CCUG 7414 / JCM 2152 / NBRC 15305 / NCIMB 9373 / NCTC 2599 / NRRL B-3711).